The sequence spans 223 residues: Octanoyltransferase (223 aa).

One can recognise a BPL/LPL catalytic domain in the interval 30–214 (DLDRDCFLLT…IVADLFGEFT (185 aa)). Residues 75–82 (RGGEITYH), 144–146 (SIG), and 157–159 (GFA) contribute to the substrate site. The active-site Acyl-thioester intermediate is the C175.

The protein belongs to the LipB family.

The protein localises to the cytoplasm. It carries out the reaction octanoyl-[ACP] + L-lysyl-[protein] = N(6)-octanoyl-L-lysyl-[protein] + holo-[ACP] + H(+). It functions in the pathway protein modification; protein lipoylation via endogenous pathway; protein N(6)-(lipoyl)lysine from octanoyl-[acyl-carrier-protein]: step 1/2. Functionally, catalyzes the transfer of endogenously produced octanoic acid from octanoyl-acyl-carrier-protein onto the lipoyl domains of lipoate-dependent enzymes. Lipoyl-ACP can also act as a substrate although octanoyl-ACP is likely to be the physiological substrate. The polypeptide is Octanoyltransferase (Desulfotalea psychrophila (strain LSv54 / DSM 12343)).